The chain runs to 509 residues: Bifunctional purine biosynthesis protein PurH (509 aa).

Positions 1 to 146 (MTIQKINRVL…KNWYRVGVCV (146 aa)) constitute an MGS-like domain.

The protein belongs to the PurH family.

It catalyses the reaction (6R)-10-formyltetrahydrofolate + 5-amino-1-(5-phospho-beta-D-ribosyl)imidazole-4-carboxamide = 5-formamido-1-(5-phospho-D-ribosyl)imidazole-4-carboxamide + (6S)-5,6,7,8-tetrahydrofolate. The enzyme catalyses IMP + H2O = 5-formamido-1-(5-phospho-D-ribosyl)imidazole-4-carboxamide. It participates in purine metabolism; IMP biosynthesis via de novo pathway; 5-formamido-1-(5-phospho-D-ribosyl)imidazole-4-carboxamide from 5-amino-1-(5-phospho-D-ribosyl)imidazole-4-carboxamide (10-formyl THF route): step 1/1. It functions in the pathway purine metabolism; IMP biosynthesis via de novo pathway; IMP from 5-formamido-1-(5-phospho-D-ribosyl)imidazole-4-carboxamide: step 1/1. This chain is Bifunctional purine biosynthesis protein PurH, found in Natranaerobius thermophilus (strain ATCC BAA-1301 / DSM 18059 / JW/NM-WN-LF).